Here is a 116-residue protein sequence, read N- to C-terminus: Large ribosomal subunit protein uL18 (116 aa).

Belongs to the universal ribosomal protein uL18 family. In terms of assembly, part of the 50S ribosomal subunit; part of the 5S rRNA/L5/L18/L25 subcomplex. Contacts the 5S and 23S rRNAs.

Its function is as follows. This is one of the proteins that bind and probably mediate the attachment of the 5S RNA into the large ribosomal subunit, where it forms part of the central protuberance. This Pseudomonas aeruginosa (strain UCBPP-PA14) protein is Large ribosomal subunit protein uL18.